The primary structure comprises 54 residues: ATP synthase F(0) complex subunit 8 (54 aa).

Residues 13–35 (ALSLWVCFPLMMLSLSSFLPLTL) traverse the membrane as a helical segment.

The protein belongs to the ATPase protein 8 family. Component of the ATP synthase complex composed at least of ATP5F1A/subunit alpha, ATP5F1B/subunit beta, ATP5MC1/subunit c (homooctomer), MT-ATP6/subunit a, MT-ATP8/subunit 8, ATP5ME/subunit e, ATP5MF/subunit f, ATP5MG/subunit g, ATP5MK/subunit k, ATP5MJ/subunit j, ATP5F1C/subunit gamma, ATP5F1D/subunit delta, ATP5F1E/subunit epsilon, ATP5PF/subunit F6, ATP5PB/subunit b, ATP5PD/subunit d, ATP5PO/subunit OSCP. ATP synthase complex consists of a soluble F(1) head domain (subunits alpha(3) and beta(3)) - the catalytic core - and a membrane F(0) domain - the membrane proton channel (subunits c, a, 8, e, f, g, k and j). These two domains are linked by a central stalk (subunits gamma, delta, and epsilon) rotating inside the F1 region and a stationary peripheral stalk (subunits F6, b, d, and OSCP).

It localises to the mitochondrion membrane. Subunit 8, of the mitochondrial membrane ATP synthase complex (F(1)F(0) ATP synthase or Complex V) that produces ATP from ADP in the presence of a proton gradient across the membrane which is generated by electron transport complexes of the respiratory chain. ATP synthase complex consist of a soluble F(1) head domain - the catalytic core - and a membrane F(1) domain - the membrane proton channel. These two domains are linked by a central stalk rotating inside the F(1) region and a stationary peripheral stalk. During catalysis, ATP synthesis in the catalytic domain of F(1) is coupled via a rotary mechanism of the central stalk subunits to proton translocation. In vivo, can only synthesize ATP although its ATP hydrolase activity can be activated artificially in vitro. Part of the complex F(0) domain. This is ATP synthase F(0) complex subunit 8 from Myxine glutinosa (Atlantic hagfish).